The primary structure comprises 188 residues: uncharacterized protein (188 aa).

A signal peptide spans 1–23; sequence MFKGQKTLAALAVSLLFTAPVYA. C42 and C81 are oxidised to a cystine.

The protein belongs to the fimbrial protein family.

The protein resides in the fimbrium. This is an uncharacterized protein from Escherichia coli (strain K12).